Reading from the N-terminus, the 518-residue chain is Allene oxide synthase, chloroplastic (518 aa).

The N-terminal 33 residues, 1 to 33 (MASISTPFPISLHPKTVRSKPLKFRVLTRPIKA), are a transit peptide targeting the chloroplast. Residues Lys133, His164, and Lys168 each coordinate heme b. Positions 321 and 389 each coordinate (13S)-hydroperoxy-(9Z,11E)-octadecadienoate. (13S)-hydroperoxy-(9Z,11E,15Z)-octadecatrienoate contacts are provided by Asn321 and Thr389. Lys469 and Cys471 together coordinate heme b.

This sequence belongs to the cytochrome P450 family. Heme b serves as cofactor.

It localises to the plastid. The protein resides in the chloroplast. It is found in the plastoglobule. The catalysed reaction is (13S)-hydroperoxy-(9Z,11E,15Z)-octadecatrienoate = (9Z,13S,15Z)-12,13-epoxyoctadeca-9,11,15-trienoate + H2O. It catalyses the reaction (13S)-hydroperoxy-(9Z,11E)-octadecadienoate = (9Z,13S)-12,13-epoxyoctadeca-9,11-dienoate + H2O. It functions in the pathway lipid metabolism; oxylipin biosynthesis. In terms of biological role, cytochrome P450 enzyme involved in the biosynthesis of oxylipin jasmonates, important phytohormones acting as growth regulators and signaling molecules for plant defense. Functions as an allene oxide synthase that converts hydroperoxy fatty acids to unstable allene epoxides. Catalyzes the dehydration of 13-HPOTE ((13S)-hydroperoxy-(9Z,11E,15Z)-octadecatrienoate), as well as 13-HPODE ((13S)-hydroperoxy-(9Z,11E)-octadecadienoate). The sequence is that of Allene oxide synthase, chloroplastic (CYP74A) from Arabidopsis thaliana (Mouse-ear cress).